Consider the following 398-residue polypeptide: Putative defective protein IntQ (398 aa).

One can recognise a Core-binding (CB) domain in the interval 51-146 (LTIKELAEKF…NLNAVFQFGV (96 aa)). The region spanning 167–378 (TIPDPLSREE…SENNNAQVAL (212 aa)) is the Tyr recombinase domain. Catalysis depends on residues Arg202, Lys236, Arg331, and His354. The active-site O-(3'-phospho-DNA)-tyrosine intermediate is Tyr364.

It belongs to the 'phage' integrase family.

Functionally, integrase is necessary for integration of the phage into the host genome by site-specific recombination. In conjunction with excisionase, integrase is also necessary for excision of the prophage from the host genome. In Escherichia coli (strain K12), this protein is Putative defective protein IntQ (intQ).